The following is a 1702-amino-acid chain: Dicer-like protein 4 (1702 aa).

Disordered regions lie at residues 1-52 (MRDE…SAAT) and 89-120 (SSSS…EKDP). Residues 17 to 31 (GKRDREQKNCEEEKN) show a composition bias toward basic and acidic residues. A compositionally biased stretch (low complexity) spans 89 to 105 (SSSSVSSFSSSSSSLFS). One can recognise a Helicase ATP-binding domain in the interval 131–307 (LCKKATEENV…SENLSKSINS (177 aa)). ATP is bound at residue 144 to 151 (LGTGCGKT). A DECH box motif is present at residues 251-254 (DECH). The 155-residue stretch at 475-629 (QLIKILSVFR…RMNLEITYRS (155 aa)) folds into the Helicase C-terminal domain. The Dicer dsRNA-binding fold domain maps to 656–748 (SISLLYKYCS…LPDSKDEIED (93 aa)). The PAZ domain occupies 932–1054 (LVEDIFPPSG…IPPELSHLKI (123 aa)). RNase III domains lie at 1083 to 1251 (ELKH…VDSG) and 1292 to 1436 (LETL…LDCG). Residues Glu1330, Asp1422, and Glu1425 each contribute to the Mg(2+) site. DRBM domains follow at residues 1462-1528 (SPIK…NLKA) and 1621-1697 (TAKS…CLKH).

It belongs to the helicase family. Dicer subfamily. As to quaternary structure, interacts with DRB4. It depends on Mg(2+) as a cofactor. The cofactor is Mn(2+).

The protein localises to the nucleus. Ribonuclease (RNase) III involved in RNA-mediated post-transcriptional gene silencing (PTGS). Functions in the biogenesis of trans-acting small interfering RNAs (ta-siRNAs, derived from the TAS1, TAS2 or TAS3 endogenous transcripts) by cleaving small dsRNAs into 21-24 nucleotide ta-siRNAs. Functions with the dsRNA-binding protein DRB4 in ta-siRNAs processing. Acts in the RDR6/SGS3/DCL4/AGO7 ta-siRNA pathway involved in leaf developmental timing. Plays a role in transitive silencing of transgenes by processing secondary siRNAs. This pathway, which requires DCL2 and RDR6, amplifies silencing by using the target RNA as substrate to generate secondary siRNAs, providing an efficient mechanism for long-distance silencing. Required for the production of the 30-40 nucleotide bacterial-induced long siRNAs (lsiRNA). May participate with DCL3 in the production of 24 nucleotide repeat-associated siRNAs (ra-siRNAs) which derive from heterochromatin and DNA repeats such as transposons. Plays an important role in antiviral RNA silencing. Involved in the production of viral siRNAs derived from the cucumber mosaic virus (CMV), turnip crinkle virus (TCV) and tobacco rattle virus (TRV). Targeted by the viral silencing suppressor (VSR) protein 2b of the cucumber mosaic virus (CMV) that inactivates DCL4 function in RNA silencing. Does not seem to be involved in microRNAs (miRNAs) processing. The polypeptide is Dicer-like protein 4 (DCL4) (Arabidopsis thaliana (Mouse-ear cress)).